We begin with the raw amino-acid sequence, 358 residues long: Nicotinate-nucleotide--dimethylbenzimidazole phosphoribosyltransferase (358 aa).

Glutamate 314 acts as the Proton acceptor in catalysis.

It belongs to the CobT family.

It carries out the reaction 5,6-dimethylbenzimidazole + nicotinate beta-D-ribonucleotide = alpha-ribazole 5'-phosphate + nicotinate + H(+). It participates in nucleoside biosynthesis; alpha-ribazole biosynthesis; alpha-ribazole from 5,6-dimethylbenzimidazole: step 1/2. Its function is as follows. Catalyzes the synthesis of alpha-ribazole-5'-phosphate from nicotinate mononucleotide (NAMN) and 5,6-dimethylbenzimidazole (DMB). This Mycobacterium marinum (strain ATCC BAA-535 / M) protein is Nicotinate-nucleotide--dimethylbenzimidazole phosphoribosyltransferase.